The sequence spans 120 residues: Ribosome-binding factor A (120 aa).

The protein belongs to the RbfA family. Monomer. Binds 30S ribosomal subunits, but not 50S ribosomal subunits or 70S ribosomes.

The protein resides in the cytoplasm. One of several proteins that assist in the late maturation steps of the functional core of the 30S ribosomal subunit. Associates with free 30S ribosomal subunits (but not with 30S subunits that are part of 70S ribosomes or polysomes). Required for efficient processing of 16S rRNA. May interact with the 5'-terminal helix region of 16S rRNA. The sequence is that of Ribosome-binding factor A from Rickettsia rickettsii (strain Iowa).